The sequence spans 62 residues: uncharacterized protein (62 aa).

Its subcellular location is the plastid. It localises to the chloroplast. This is an uncharacterized protein from Chlamydomonas reinhardtii (Chlamydomonas smithii).